We begin with the raw amino-acid sequence, 357 residues long: uncharacterized protein (357 aa).

9 helical membrane-spanning segments follow: residues 13 to 33 (PVTGIYNILLFNLFPLATYLV), 44 to 64 (IACTLLCSITVILAYRMCAVY), 72 to 92 (VSTFGLAYGFLIMMSLRTCFL), 148 to 168 (VLTYKSLGIRTAVYVGAFCFV), 181 to 201 (LPISANPWYIQVAFCVTSGFF), 203 to 223 (YLFINALYYLFAIIFVPLGIW), 266 to 286 (IALTGSKFLASCSCFFLSALF), 293 to 313 (SISGRCSPAFFFQLLIQPFLI), and 327 to 347 (YWVLIIEMLINGTYGMGVVLL).

The protein localises to the mitochondrion membrane. This is an uncharacterized protein from Schizosaccharomyces pombe (strain 972 / ATCC 24843) (Fission yeast).